We begin with the raw amino-acid sequence, 350 residues long: uncharacterized protein (350 aa).

The segment covering 197-212 (KNDNSEDNRSEDDLKS) has biased composition (basic and acidic residues). Residues 197–217 (KNDNSEDNRSEDDLKSSQDPV) are disordered.

The protein resides in the plastid. Its subcellular location is the chloroplast. This is an uncharacterized protein from Euglena gracilis.